A 362-amino-acid polypeptide reads, in one-letter code: Aminomethyltransferase (362 aa).

Belongs to the GcvT family. As to quaternary structure, the glycine cleavage system is composed of four proteins: P, T, L and H.

The enzyme catalyses N(6)-[(R)-S(8)-aminomethyldihydrolipoyl]-L-lysyl-[protein] + (6S)-5,6,7,8-tetrahydrofolate = N(6)-[(R)-dihydrolipoyl]-L-lysyl-[protein] + (6R)-5,10-methylene-5,6,7,8-tetrahydrofolate + NH4(+). Functionally, the glycine cleavage system catalyzes the degradation of glycine. This is Aminomethyltransferase from Listeria monocytogenes serotype 4a (strain HCC23).